The sequence spans 127 residues: Aspartate 1-decarboxylase (127 aa).

The active-site Schiff-base intermediate with substrate; via pyruvic acid is the Ser25. Ser25 is subject to Pyruvic acid (Ser). Thr57 contributes to the substrate binding site. Tyr58 (proton donor) is an active-site residue. Position 73-75 (73-75) interacts with substrate; sequence GAA.

This sequence belongs to the PanD family. As to quaternary structure, heterooctamer of four alpha and four beta subunits. Pyruvate serves as cofactor. Post-translationally, is synthesized initially as an inactive proenzyme, which is activated by self-cleavage at a specific serine bond to produce a beta-subunit with a hydroxyl group at its C-terminus and an alpha-subunit with a pyruvoyl group at its N-terminus.

The protein localises to the cytoplasm. It carries out the reaction L-aspartate + H(+) = beta-alanine + CO2. Its pathway is cofactor biosynthesis; (R)-pantothenate biosynthesis; beta-alanine from L-aspartate: step 1/1. In terms of biological role, catalyzes the pyruvoyl-dependent decarboxylation of aspartate to produce beta-alanine. The protein is Aspartate 1-decarboxylase of Bacillus licheniformis (strain ATCC 14580 / DSM 13 / JCM 2505 / CCUG 7422 / NBRC 12200 / NCIMB 9375 / NCTC 10341 / NRRL NRS-1264 / Gibson 46).